The following is a 372-amino-acid chain: uncharacterized protein (372 aa).

A disordered region spans residues 328-353 (KKGQPCKDEDAVTVPLPSSDPGKETQ).

Induces the SOS system when expressed in E.coli, therefore, it may play a role in DNA metabolism and/or in genome stability. This is an uncharacterized protein from Saccharomyces cerevisiae (strain ATCC 204508 / S288c) (Baker's yeast).